We begin with the raw amino-acid sequence, 186 residues long: uncharacterized protein (186 aa).

The signal sequence occupies residues 1–28 (MSVKPAALFRISAALAVAGLGASLIASA).

This is an uncharacterized protein from Rhizobium meliloti (strain 1021) (Ensifer meliloti).